Consider the following 164-residue polypeptide: Phosphopantetheine adenylyltransferase (164 aa).

Ser9 contacts substrate. ATP-binding positions include 9–10 (SF) and His17. Substrate contacts are provided by Lys41, Leu73, and Lys87. ATP-binding positions include 88-90 (GLR), Glu98, and 123-129 (YSYISSS).

This sequence belongs to the bacterial CoaD family. As to quaternary structure, homohexamer. Requires Mg(2+) as cofactor.

It localises to the cytoplasm. It catalyses the reaction (R)-4'-phosphopantetheine + ATP + H(+) = 3'-dephospho-CoA + diphosphate. The protein operates within cofactor biosynthesis; coenzyme A biosynthesis; CoA from (R)-pantothenate: step 4/5. In terms of biological role, reversibly transfers an adenylyl group from ATP to 4'-phosphopantetheine, yielding dephospho-CoA (dPCoA) and pyrophosphate. This chain is Phosphopantetheine adenylyltransferase, found in Clostridium perfringens (strain ATCC 13124 / DSM 756 / JCM 1290 / NCIMB 6125 / NCTC 8237 / Type A).